The sequence spans 629 residues: Protein EDS1B (629 aa).

S123 serves as the catalytic Nucleophile. Active-site charge relay system residues include D187 and H317.

Interacts (via N-terminus) with PAD4 and SAG101. Part of a nuclear complex made of EDS1, PAD4 and SAG101, that can be redirected to the cytoplasm in the presence of an extranuclear form of EDS1. Does not interact with itself or with EDS1.

It is found in the nucleus. The protein resides in the cytoplasm. Its function is as follows. Acts as a second functional copy of EDS1. Can mediate HRT-mediated resistance to turnip crinkle virus. The polypeptide is Protein EDS1B (EDS1B) (Arabidopsis thaliana (Mouse-ear cress)).